We begin with the raw amino-acid sequence, 190 residues long: Copper-binding lipoprotein NosL (190 aa).

An N-terminal signal peptide occupies residues Met-1–Gly-23. Cys-24 is lipidated: N-palmitoyl cysteine. Residue Cys-24 is the site of S-diacylglycerol cysteine attachment. The interval Met-170–His-190 is disordered. The span at Pro-180–His-190 shows a compositional bias: low complexity.

The protein belongs to the NosL family. In terms of assembly, monomer.

It localises to the cell membrane. Functionally, may act as a metallochaperone involved in nitrous oxide reductase assembly. Specifically binds Cu(+). This is Copper-binding lipoprotein NosL from Stutzerimonas stutzeri (Pseudomonas stutzeri).